Reading from the N-terminus, the 366-residue chain is GTPase Obg (366 aa).

In terms of domain architecture, Obg spans 1–162 (MRFVDEATIN…RRLRLELKIL (162 aa)). Positions 163 to 335 (ADAGLLGLPN…VVDAMWRLRD (173 aa)) constitute an OBG-type G domain. GTP is bound by residues 169–176 (GLPNAGKS), 194–198 (FTTLT), 218–221 (DIPG), 288–291 (NKID), and 316–318 (SAM). Mg(2+) is bound by residues S176 and T196.

The protein belongs to the TRAFAC class OBG-HflX-like GTPase superfamily. OBG GTPase family. As to quaternary structure, monomer. Mg(2+) is required as a cofactor.

It is found in the cytoplasm. Functionally, an essential GTPase which binds GTP, GDP and possibly (p)ppGpp with moderate affinity, with high nucleotide exchange rates and a fairly low GTP hydrolysis rate. Plays a role in control of the cell cycle, stress response, ribosome biogenesis and in those bacteria that undergo differentiation, in morphogenesis control. This chain is GTPase Obg, found in Nitratidesulfovibrio vulgaris (strain ATCC 29579 / DSM 644 / CCUG 34227 / NCIMB 8303 / VKM B-1760 / Hildenborough) (Desulfovibrio vulgaris).